Reading from the N-terminus, the 259-residue chain is Small ribosomal subunit protein eS4 (259 aa).

Residues 41-105 (LPLSVLLKER…TDQSFRILYD (65 aa)) form the S4 RNA-binding domain. A Phosphothreonine modification is found at T248. Residue S258 is modified to Phosphoserine.

This sequence belongs to the eukaryotic ribosomal protein eS4 family.

The sequence is that of Small ribosomal subunit protein eS4 from Tetrahymena thermophila.